The primary structure comprises 363 residues: Protein-glutamate methylesterase/protein-glutamine glutaminase 2 (363 aa).

The 118-residue stretch at 7–124 folds into the Response regulatory domain; the sequence is RVLVVDDSAL…SLTLENVADE (118 aa). Position 58 is a 4-aspartylphosphate (D58). The CheB-type methylesterase domain maps to 160-357; the sequence is PVASRTTPSK…NLLMVQSAAQ (198 aa). Active-site residues include S176, H203, and D299.

It belongs to the CheB family. In terms of processing, phosphorylated by CheA. Phosphorylation of the N-terminal regulatory domain activates the methylesterase activity.

Its subcellular location is the cytoplasm. The catalysed reaction is [protein]-L-glutamate 5-O-methyl ester + H2O = L-glutamyl-[protein] + methanol + H(+). It carries out the reaction L-glutaminyl-[protein] + H2O = L-glutamyl-[protein] + NH4(+). Involved in chemotaxis. Part of a chemotaxis signal transduction system that modulates chemotaxis in response to various stimuli. Catalyzes the demethylation of specific methylglutamate residues introduced into the chemoreceptors (methyl-accepting chemotaxis proteins or MCP) by CheR. Also mediates the irreversible deamidation of specific glutamine residues to glutamic acid. The protein is Protein-glutamate methylesterase/protein-glutamine glutaminase 2 of Koribacter versatilis (strain Ellin345).